Reading from the N-terminus, the 817-residue chain is DNA ligase (817 aa).

NAD(+) contacts are provided by residues 45–49, 94–95, and Glu131; these read DVEYD and SI. Catalysis depends on Lys133, which acts as the N6-AMP-lysine intermediate. NAD(+) is bound by residues Arg154, Glu193, Lys311, and Lys335. Zn(2+) contacts are provided by Cys444, Cys447, Cys462, and Cys468. Residues 733–817 enclose the BRCT domain; that stretch reads AEEGVLDGKT…LLKKPAGDQA (85 aa).

The protein belongs to the NAD-dependent DNA ligase family. LigA subfamily. It depends on Mg(2+) as a cofactor. Mn(2+) serves as cofactor.

It catalyses the reaction NAD(+) + (deoxyribonucleotide)n-3'-hydroxyl + 5'-phospho-(deoxyribonucleotide)m = (deoxyribonucleotide)n+m + AMP + beta-nicotinamide D-nucleotide.. In terms of biological role, DNA ligase that catalyzes the formation of phosphodiester linkages between 5'-phosphoryl and 3'-hydroxyl groups in double-stranded DNA using NAD as a coenzyme and as the energy source for the reaction. It is essential for DNA replication and repair of damaged DNA. The polypeptide is DNA ligase (Ralstonia pickettii (strain 12J)).